Consider the following 1186-residue polypeptide: MRFVLCCTLIALAALSVKAFGHHPGNRDTVEVKNRKYNAASSESSYLNKDNDSISAGAHRAKSVEQSQDKSKYTSGPEGVSYSGRSQNYKDSKQAYADYHSDPNGGSASAGQSRDSSLRERNVHYVSDGEAVAASSDARDENRSAQQNAQANWNADGSYGVSADRSGSASSRRRQANYYSDKDITAASKDDSRADSSRRSNAYYNRDSDGSESAGLSDRSASSSKNDNVFVYRTKDSIGGQAKSSRSSHSQESDAYYNSSPDGSYNAGTRDSSISNKKKASSTIYADKDQIRAANDRSSSKQLKQSSAQISSGPEGTSVSSKDRQYSNDKRSKSDAYVGRDGTVAYSNKDSEKTSRQSNTNYADQNSVRSDSAASDQTSKSYDRGYSDKNIVAHSSGSRGSQNQKSSSYRADKDGFSSSTNTEKSKFSSSNSVVETSDGASASRESSAEDTKSSNSNVQSDEKSASQSSSSRSSQESASYSSSSSSSTLSEDSSEVDIDLGNLGWWWNSDNKVQRAAGGATKSGASSSTQATTVSGADDSADSYTWWWNPRRSSSSSSSASSSSSGSNVGGSSQSSGSSTSGSNARGHLGTVSSTGSTSNTDSSSKSAGSRTSGGSSTYGYSSSHRGGSVSSTGSSSNTDSSTKNAGSSTSGGSSTYGYSSSHRGGSVSSTGSSSNTDSSTKSAGSSTSGGSSTYGYSSRHRGGRVSSTGSSSTTDASSNSVGSSTSGGSSTYGYSSNSRDGSVSSTGSSSNTDSNSNSAGSSTSGGSSTYGYSSNSRDGSVSSTGSSSNTDSNSNSAGSSTSGGSSTYGYSSNSRDGSVSSTGSSSNTDASTDLTGSSTSGGSSTYGYSSDSRDGSVSSTGSSSNTDASTDLAGSSTSGGSSTYGYSSDCGDGSVSSTGSSSNTDASTDLAGSSTSGGSSTYGYSSDSRDGSVSSTGSSSNTDASTDLAGSSTSGGSSTYGYSSNSRDGSVSSTGSSSNTDASTDLTGSSTSGGSSTYGYSSSNRDGSVLATGSSSNTDASTTEESTTSAGSSTEGYSSSSHDGSVTSTDGSSTSGGASSSSASTAKSDAASSEDGFWWWNRRKSGSGHKSATVQSSTTDKTSTDSASSTDSTSSTSGASTTTSGSSSTSGGSSTSDASSTSSSVSRSHHSGVNRLLHKPGQGKICLCFENIFDIPYHLRKNIGV.

Positions 1-21 are cleaved as a signal peptide; it reads MRFVLCCTLIALAALSVKAFG. 2 stretches are compositionally biased toward polar residues: residues 39 to 48 and 104 to 115; these read AASSESSYLN and NGGSASAGQSRD. 3 disordered regions span residues 39–119, 131–494, and 518–1157; these read AASS…SSLR, AVAA…EDSS, and GGAT…VNRL. Residues 145–155 show a composition bias toward low complexity; the sequence is AQQNAQANWNA. The segment covering 180 to 198 has biased composition (basic and acidic residues); that stretch reads SDKDITAASKDDSRADSSR. Residues 211–224 show a composition bias toward low complexity; sequence SESAGLSDRSASSS. A compositionally biased stretch (polar residues) spans 256–275; that stretch reads YYNSSPDGSYNAGTRDSSIS. Over residues 286–299 the composition is skewed to basic and acidic residues; that stretch reads ADKDQIRAANDRSS. Residues 300-312 show a composition bias toward low complexity; the sequence is SKQLKQSSAQISS. Positions 321–334 are enriched in basic and acidic residues; that stretch reads SKDRQYSNDKRSKS. Composition is skewed to polar residues over residues 356-380, 393-409, and 416-445; these read RQSNTNYADQNSVRSDSAASDQTSK, AHSSGSRGSQNQKSSSY, and FSSSTNTEKSKFSSSNSVVETSDGASASRE. Low complexity-rich tracts occupy residues 465–491, 518–537, 553–698, 705–1004, 1015–1075, and 1097–1145; these read ASQSSSSRSSQESASYSSSSSSSTLSE, GGATKSGASSSTQATTVSGA, SSSS…YGYS, RVSS…YSSS, SSSN…ASSE, and SSTT…TSSS. Tandem repeats lie at residues 593–630, 631–668, 669–706, 707–744, 745–782, 783–820, 821–858, 859–896, 897–934, 935–972, and 973–1010. Residues 1148-1157 show a composition bias toward basic residues; the sequence is RSHHSGVNRL.

As to expression, produced exclusively in the middle (MSG) section of silk glands.

It localises to the secreted. Functionally, provides the silk fibroin thread with a sticky coating. Acts as a cement by sticking silk threads together. The sequence is that of Sericin 1 (ser1) from Bombyx mori (Silk moth).